Consider the following 89-residue polypeptide: Small ribosomal subunit protein uS15 (89 aa).

The protein belongs to the universal ribosomal protein uS15 family. In terms of assembly, part of the 30S ribosomal subunit. Forms a bridge to the 50S subunit in the 70S ribosome, contacting the 23S rRNA.

Functionally, one of the primary rRNA binding proteins, it binds directly to 16S rRNA where it helps nucleate assembly of the platform of the 30S subunit by binding and bridging several RNA helices of the 16S rRNA. In terms of biological role, forms an intersubunit bridge (bridge B4) with the 23S rRNA of the 50S subunit in the ribosome. This chain is Small ribosomal subunit protein uS15, found in Synechocystis sp. (strain ATCC 27184 / PCC 6803 / Kazusa).